The primary structure comprises 87 residues: MSETKNVRTLQGKVVSDKMDKTVTVLVERKVKHSLYGKIIRLSTKIHAHDENNQYGIGDVVVISESRPLSKTKSWVVSELVEKARSI.

The protein belongs to the universal ribosomal protein uS17 family. In terms of assembly, part of the 30S ribosomal subunit.

Functionally, one of the primary rRNA binding proteins, it binds specifically to the 5'-end of 16S ribosomal RNA. This Neisseria gonorrhoeae (strain ATCC 700825 / FA 1090) protein is Small ribosomal subunit protein uS17.